Here is a 337-residue protein sequence, read N- to C-terminus: tRNA N6-adenosine threonylcarbamoyltransferase (337 aa).

Histidine 111 and histidine 115 together coordinate Fe cation. Residues 134–138 (LVSGG), aspartate 167, glycine 180, and asparagine 272 contribute to the substrate site. A Fe cation-binding site is contributed by aspartate 300.

It belongs to the KAE1 / TsaD family. It depends on Fe(2+) as a cofactor.

It localises to the cytoplasm. It carries out the reaction L-threonylcarbamoyladenylate + adenosine(37) in tRNA = N(6)-L-threonylcarbamoyladenosine(37) in tRNA + AMP + H(+). Functionally, required for the formation of a threonylcarbamoyl group on adenosine at position 37 (t(6)A37) in tRNAs that read codons beginning with adenine. Is involved in the transfer of the threonylcarbamoyl moiety of threonylcarbamoyl-AMP (TC-AMP) to the N6 group of A37, together with TsaE and TsaB. TsaD likely plays a direct catalytic role in this reaction. The protein is tRNA N6-adenosine threonylcarbamoyltransferase of Salmonella arizonae (strain ATCC BAA-731 / CDC346-86 / RSK2980).